A 382-amino-acid polypeptide reads, in one-letter code: Pyrimidine monooxygenase RutA (382 aa).

FMN is bound by residues 68–69, Asn134, Glu143, 159–160, and Ser209; these read IK and RY.

This sequence belongs to the NtaA/SnaA/DszA monooxygenase family. RutA subfamily.

The catalysed reaction is uracil + FMNH2 + NADH + O2 = (Z)-3-ureidoacrylate + FMN + NAD(+) + H2O + H(+). The enzyme catalyses thymine + FMNH2 + NADH + O2 = (Z)-2-methylureidoacrylate + FMN + NAD(+) + H2O + H(+). In terms of biological role, catalyzes the pyrimidine ring opening between N-3 and C-4 by an unusual flavin hydroperoxide-catalyzed mechanism, adding oxygen atoms in the process to yield ureidoacrylate peracid, that immediately reacts with FMN forming ureidoacrylate and FMN-N(5)-oxide. The FMN-N(5)-oxide reacts spontaneously with NADH to produce FMN. Requires the flavin reductase RutF to regenerate FMN in vivo. In Escherichia coli (strain B / BL21-DE3), this protein is Pyrimidine monooxygenase RutA.